We begin with the raw amino-acid sequence, 123 residues long: Large ribosomal subunit protein uL18 (123 aa).

Belongs to the universal ribosomal protein uL18 family. Part of the 50S ribosomal subunit; part of the 5S rRNA/L5/L18/L25 subcomplex. Contacts the 5S and 23S rRNAs.

Its function is as follows. This is one of the proteins that bind and probably mediate the attachment of the 5S RNA into the large ribosomal subunit, where it forms part of the central protuberance. The sequence is that of Large ribosomal subunit protein uL18 from Chlamydia trachomatis serovar L2 (strain ATCC VR-902B / DSM 19102 / 434/Bu).